A 504-amino-acid polypeptide reads, in one-letter code: ATP synthase subunit alpha (504 aa).

169-176 (GDRQTGKT) is an ATP binding site.

This sequence belongs to the ATPase alpha/beta chains family. F-type ATPases have 2 components, CF(1) - the catalytic core - and CF(0) - the membrane proton channel. CF(1) has five subunits: alpha(3), beta(3), gamma(1), delta(1), epsilon(1). CF(0) has three main subunits: a(1), b(2) and c(9-12). The alpha and beta chains form an alternating ring which encloses part of the gamma chain. CF(1) is attached to CF(0) by a central stalk formed by the gamma and epsilon chains, while a peripheral stalk is formed by the delta and b chains.

It localises to the cell membrane. The enzyme catalyses ATP + H2O + 4 H(+)(in) = ADP + phosphate + 5 H(+)(out). Produces ATP from ADP in the presence of a proton gradient across the membrane. The alpha chain is a regulatory subunit. The chain is ATP synthase subunit alpha from Clostridium botulinum (strain Eklund 17B / Type B).